The primary structure comprises 209 residues: Ribosomal RNA large subunit methyltransferase E (209 aa).

S-adenosyl-L-methionine is bound by residues Gly63, Trp65, Asp83, Asp99, and Asp124. The Proton acceptor role is filled by Lys164.

It belongs to the class I-like SAM-binding methyltransferase superfamily. RNA methyltransferase RlmE family.

It localises to the cytoplasm. The catalysed reaction is uridine(2552) in 23S rRNA + S-adenosyl-L-methionine = 2'-O-methyluridine(2552) in 23S rRNA + S-adenosyl-L-homocysteine + H(+). Its function is as follows. Specifically methylates the uridine in position 2552 of 23S rRNA at the 2'-O position of the ribose in the fully assembled 50S ribosomal subunit. The chain is Ribosomal RNA large subunit methyltransferase E from Pseudoalteromonas translucida (strain TAC 125).